Here is a 1958-residue protein sequence, read N- to C-terminus: Sodium channel protein type 10 subunit alpha (1958 aa).

At Met-1–Lys-125 the chain is on the cytoplasmic side. The tract at residues Gln-27 to Gln-54 is disordered. Positions Arg-32–Arg-42 are enriched in basic residues. Positions Gly-43–Gln-54 are enriched in basic and acidic residues. Residues Phe-116–Gln-404 form an I repeat. The chain crosses the membrane as a helical span at residues Val-126–Arg-149. Topologically, residues Thr-150 to Glu-154 are extracellular. Residues Lys-155 to Ala-174 traverse the membrane as a helical segment. Topologically, residues Arg-175–Asp-187 are cytoplasmic. The chain crosses the membrane as a helical span at residues Pro-188–Ile-206. The Extracellular segment spans residues Asp-207 to Ser-212. A helical; Voltage-sensor membrane pass occupies residues Gly-213–Leu-232. Residues Lys-233 to Asp-248 are Cytoplasmic-facing. Residues Val-249–Leu-272 traverse the membrane as a helical segment. Residues Lys-273–Ser-340 are Extracellular-facing. Cys-276 and Cys-318 are oxidised to a cystine. N-linked (GlcNAc...) asparagine glycans are attached at residues Asn-279, Asn-288, Asn-311, and Asn-334. Residues Phe-341–Leu-365 constitute an intramembrane region (pore-forming). The Extracellular segment spans residues Arg-366–Tyr-372. Residues Met-373–Ala-398 traverse the membrane as a helical segment. Residues Tyr-399–Phe-658 are Cytoplasmic-facing. 4 positions are modified to phosphoserine: Ser-440, Ser-443, Ser-466, and Ser-478. Disordered stretches follow at residues His-444–Gln-483 and Gly-539–Gly-583. Residues Pro-549–Gly-560 show a composition bias toward pro residues. A phosphoserine mark is found at Ser-611 and Ser-614. The II repeat unit spans residues Cys-646–Gln-910. A helical membrane pass occupies residues Glu-659–Met-683. Residues Glu-684 to Ala-694 are Extracellular-facing. A helical membrane pass occupies residues Met-695–Phe-718. Residues Asp-719–Lys-726 lie on the Cytoplasmic side of the membrane. The chain crosses the membrane as a helical span at residues Lys-727–Ser-746. Residues Lys-747–Ser-752 are Extracellular-facing. The helical; Voltage-sensor transmembrane segment at Val-753–Leu-772 threads the bilayer. The Cytoplasmic segment spans residues Asn-773–Asn-788. The helical transmembrane segment at Leu-789–Ser-809 threads the bilayer. Residues Glu-810 to Asp-833 lie on the Extracellular side of the membrane. An intramembrane region (pore-forming) is located at residues Phe-834–Trp-854. The Extracellular portion of the chain corresponds to Val-855 to Tyr-863. An intrachain disulfide couples Cys-856 to Cys-865. The helical transmembrane segment at Ile-864–Leu-889 threads the bilayer. Residues Asn-890 to Arg-1148 lie on the Cytoplasmic side of the membrane. The interval Asp-1006–Asp-1094 is disordered. Residues Ala-1017–Gln-1038 show a composition bias toward polar residues. Residues Gln-1141–Leu-1450 form an III repeat. A helical transmembrane segment spans residues Ile-1149 to Phe-1172. The Extracellular portion of the chain corresponds to Glu-1173–Ser-1185. Residues Val-1186–Phe-1211 form a helical membrane-spanning segment. At Lys-1212–Asn-1217 the chain is on the cytoplasmic side. Residues Ala-1218–Leu-1239 form a helical membrane-spanning segment. Over Glu-1240–Asp-1243 the chain is Extracellular. A helical; Voltage-sensor transmembrane segment spans residues Val-1244 to Phe-1265. Residues Glu-1266–Asn-1284 lie on the Cytoplasmic side of the membrane. The helical transmembrane segment at Val-1285 to Val-1312 threads the bilayer. Residues Asp-1313–Val-1354 lie on the Extracellular side of the membrane. 3 N-linked (GlcNAc...) asparagine glycosylation sites follow: Asn-1323, Asn-1329, and Asn-1337. The segment at residues Ala-1355–Ala-1376 is an intramembrane region (pore-forming). The Extracellular segment spans residues Ala-1377–Ser-1392. A helical membrane pass occupies residues Leu-1393–Ile-1419. Topologically, residues Asp-1420–Asp-1472 are cytoplasmic. Ser-1452 carries the post-translational modification Phosphoserine; by PKC. The IV repeat unit spans residues Ile-1459 to Gln-1758. A helical membrane pass occupies residues Ile-1473–Val-1496. Topologically, residues Glu-1497–Lys-1507 are extracellular. A glycan (N-linked (GlcNAc...) asparagine) is linked at Asn-1500. The helical transmembrane segment at Val-1508–Leu-1531 threads the bilayer. Residues Arg-1532 to Thr-1537 are Cytoplasmic-facing. A helical membrane pass occupies residues Asn-1538–Leu-1561. Residues Ser-1562–Leu-1573 are Extracellular-facing. A helical; Voltage-sensor membrane pass occupies residues Arg-1574 to Arg-1595. Topologically, residues Thr-1596 to Asn-1610 are cytoplasmic. A helical transmembrane segment spans residues Ile-1611–Val-1633. At Ile-1634 to Thr-1647 the chain is on the extracellular side. The segment at residues Phe-1648–Pro-1670 is an intramembrane region (pore-forming). Topologically, residues Ile-1671–Val-1698 are extracellular. A glycan (N-linked (GlcNAc...) asparagine) is linked at Asn-1687. Residues Gly-1699–Leu-1723 form a helical membrane-spanning segment. Over Glu-1724–Gln-1958 the chain is Cytoplasmic. The region spanning Glu-1852 to Pro-1881 is the IQ domain. The tract at residues Asn-1901–Gln-1958 is disordered. Residues Ala-1933 to Gln-1942 are compositionally biased toward polar residues. The span at Val-1947–Gln-1958 shows a compositional bias: basic and acidic residues.

The protein belongs to the sodium channel (TC 1.A.1.10) family. Nav1.8/SCN10A subfamily. The channel consists of an ion conducting pore forming alpha-subunit regulated by one or more associated auxiliary subunits SCN1B, SCN2B and SCN3B; electrophysiological properties may vary depending on the type of the associated beta subunits. Found in a number of complexes with PRX, DYNLT1 and PDZD2. Interacts with proteins such as FSTL1, PRX, DYNLT1, PDZD2, S100A10 and many others. Interacts with NEDD4 and NEDD4L. Ubiquitinated by NEDD4L; which promotes its endocytosis. Post-translationally, phosphorylation at Ser-1452 by PKC in a highly conserved cytoplasmic loop slows inactivation of the sodium channel and reduces peak sodium currents. In terms of processing, lacks the cysteine which covalently binds the conotoxin GVIIJ. This cysteine (position 815) is speculated in other sodium channel subunits alpha to be implied in covalent binding with the sodium channel subunit beta-2 or beta-4. Expressed in dorsal root ganglion and trigeminal ganglion.

The protein resides in the cell membrane. The enzyme catalyses Na(+)(in) = Na(+)(out). Tetrodotoxin-resistant channel that mediates the voltage-dependent sodium ion permeability of excitable membranes. Assuming opened or closed conformations in response to the voltage difference across the membrane, the protein forms a sodium-selective channel through which sodium ions may pass in accordance with their electrochemical gradient. Plays a role in neuropathic pain mechanisms. This Mus musculus (Mouse) protein is Sodium channel protein type 10 subunit alpha.